The primary structure comprises 290 residues: Protease HtpX (290 aa).

2 helical membrane-spanning segments follow: residues 6–26 (LFLV…NILF) and 36–56 (ISGL…ISLL). His-143 contacts Zn(2+). Glu-144 is a catalytic residue. Position 147 (His-147) interacts with Zn(2+). 2 helical membrane-spanning segments follow: residues 158–178 (LIQG…AGVI) and 200–220 (ITVF…VMWF). Residue Glu-225 coordinates Zn(2+).

Belongs to the peptidase M48B family. Zn(2+) is required as a cofactor.

It localises to the cell inner membrane. This is Protease HtpX from Aeromonas hydrophila subsp. hydrophila (strain ATCC 7966 / DSM 30187 / BCRC 13018 / CCUG 14551 / JCM 1027 / KCTC 2358 / NCIMB 9240 / NCTC 8049).